The primary structure comprises 509 residues: Aspartic proteinase oryzasin-1 (509 aa).

The signal sequence occupies residues 1–24 (MGTRSVALVLLAAVLLQALLPASA). Positions 25-67 (AEGLVRIALKKRPIDENSRVAARLSGEEGARRLGLRGANSLGG) are cleaved as a propeptide — activation peptide. The 422-residue stretch at 85–506 (YFGEIGVGTP…DYGKMRVGFA (422 aa)) folds into the Peptidase A1 domain. Residue Asp103 is part of the active site. Cys116 and Cys122 are joined by a disulfide. Asn252 carries an N-linked (GlcNAc...) asparagine glycan. A disulfide bridge connects residues Cys281 and Cys285. The active site involves Asp290. The Saposin B-type domain maps to 315-420 (VVSQECKTVV…NQLCDKLPSP (106 aa)). Disulfide bonds link Cys320-Cys414, Cys345-Cys386, Cys351-Cys383, and Cys428-Cys465. N-linked (GlcNAc...) asparagine glycosylation occurs at Asn400.

The protein belongs to the peptidase A1 family.

The protein localises to the vacuole. Involved in the breakdown of propeptides of storage proteins in protein-storage vacuoles. This chain is Aspartic proteinase oryzasin-1, found in Oryza sativa subsp. japonica (Rice).